A 175-amino-acid chain; its full sequence is NADH dehydrogenase [ubiquinone] iron-sulfur protein 4, mitochondrial (175 aa).

The N-terminal 42 residues, 1 to 42, are a transit peptide targeting the mitochondrion; the sequence is MAAVSMSVALRQALWGRRVATVAAVSVSKVSTRSLSTSTWRL. Positions 149 to 175 are disordered; it reads ERKVPKPKSKSYGANFSWNKRTRVSTK. Ser173 is modified (phosphoserine).

It belongs to the complex I NDUFS4 subunit family. Mammalian complex I is composed of 45 different subunits. This is a component of the iron-sulfur (IP) fragment of the enzyme. Interacts with BCAP31 and TOMM40; the interaction mediates its translocation to the mitochondria; the interaction with BCAP31 is direct. In terms of processing, phosphorylated.

Its subcellular location is the mitochondrion inner membrane. In terms of biological role, accessory subunit of the mitochondrial membrane respiratory chain NADH dehydrogenase (Complex I), that is believed not to be involved in catalysis. Complex I functions in the transfer of electrons from NADH to the respiratory chain. The immediate electron acceptor for the enzyme is believed to be ubiquinone. The sequence is that of NADH dehydrogenase [ubiquinone] iron-sulfur protein 4, mitochondrial (NDUFS4) from Bos taurus (Bovine).